Reading from the N-terminus, the 339-residue chain is Anthranilate phosphoribosyltransferase (339 aa).

5-phospho-alpha-D-ribose 1-diphosphate-binding positions include Gly80, 83-84 (GD), Thr88, 90-93 (NIST), 108-116 (KHGNRAVSS), and Ser120. Gly80 contacts anthranilate. Ser92 is a Mg(2+) binding site. Residue Asn111 participates in anthranilate binding. Arg166 is an anthranilate binding site. Mg(2+) contacts are provided by Asp225 and Glu226.

It belongs to the anthranilate phosphoribosyltransferase family. As to quaternary structure, homodimer. The cofactor is Mg(2+).

It carries out the reaction N-(5-phospho-beta-D-ribosyl)anthranilate + diphosphate = 5-phospho-alpha-D-ribose 1-diphosphate + anthranilate. It participates in amino-acid biosynthesis; L-tryptophan biosynthesis; L-tryptophan from chorismate: step 2/5. Functionally, catalyzes the transfer of the phosphoribosyl group of 5-phosphorylribose-1-pyrophosphate (PRPP) to anthranilate to yield N-(5'-phosphoribosyl)-anthranilate (PRA). This chain is Anthranilate phosphoribosyltransferase, found in Caldanaerobacter subterraneus subsp. tengcongensis (strain DSM 15242 / JCM 11007 / NBRC 100824 / MB4) (Thermoanaerobacter tengcongensis).